Reading from the N-terminus, the 275-residue chain is 2,3,4,5-tetrahydropyridine-2,6-dicarboxylate N-succinyltransferase (275 aa).

Substrate contacts are provided by Arg-106 and Asp-143.

This sequence belongs to the transferase hexapeptide repeat family. Homotrimer.

The protein resides in the cytoplasm. The catalysed reaction is (S)-2,3,4,5-tetrahydrodipicolinate + succinyl-CoA + H2O = (S)-2-succinylamino-6-oxoheptanedioate + CoA. It participates in amino-acid biosynthesis; L-lysine biosynthesis via DAP pathway; LL-2,6-diaminopimelate from (S)-tetrahydrodipicolinate (succinylase route): step 1/3. This chain is 2,3,4,5-tetrahydropyridine-2,6-dicarboxylate N-succinyltransferase, found in Burkholderia ambifaria (strain ATCC BAA-244 / DSM 16087 / CCUG 44356 / LMG 19182 / AMMD) (Burkholderia cepacia (strain AMMD)).